A 142-amino-acid polypeptide reads, in one-letter code: Small ribosomal subunit protein uS9 (142 aa).

The protein belongs to the universal ribosomal protein uS9 family.

The protein resides in the cytoplasm. This Syntrichia ruralis (Great hairy screw-moss) protein is Small ribosomal subunit protein uS9 (RPS16).